The primary structure comprises 312 residues: HTH-type transcriptional regulator TdcA (312 aa).

The 58-residue stretch at 7–64 folds into the HTH lysR-type domain; it reads PKTQHLVVFQEVIRSGSIGSAAKELGLTQPAVSKIINDIEDYFGVELVVRKNTGVTLT. Residues 24–43 constitute a DNA-binding region (H-T-H motif); that stretch reads IGSAAKELGLTQPAVSKIIN.

The protein belongs to the LysR transcriptional regulatory family.

Its pathway is amino-acid degradation; L-threonine degradation via propanoate pathway [regulation]. Its function is as follows. Transcriptional activator for the tdcABCDE operon. This is HTH-type transcriptional regulator TdcA (tdcA) from Escherichia coli O157:H7.